The primary structure comprises 302 residues: Arginase (302 aa).

H103, D126, H128, and D130 together coordinate Mn(2+). Residues H128 to N132, S139 to N141, and D180 each bind substrate. Mn(2+)-binding residues include D229 and D231. Residues T243 and E274 each contribute to the substrate site.

Belongs to the arginase family. Mn(2+) serves as cofactor.

It catalyses the reaction L-arginine + H2O = urea + L-ornithine. Its pathway is nitrogen metabolism; urea cycle; L-ornithine and urea from L-arginine: step 1/1. This is Arginase (arg) from Staphylococcus aureus (strain COL).